A 341-amino-acid chain; its full sequence is Ferrochelatase (341 aa).

Positions 189 and 293 each coordinate Fe cation.

It belongs to the ferrochelatase family.

It is found in the cytoplasm. It catalyses the reaction heme b + 2 H(+) = protoporphyrin IX + Fe(2+). It functions in the pathway porphyrin-containing compound metabolism; protoheme biosynthesis; protoheme from protoporphyrin-IX: step 1/1. Functionally, catalyzes the ferrous insertion into protoporphyrin IX. The protein is Ferrochelatase of Pseudomonas fluorescens (strain Pf0-1).